Here is a 368-residue protein sequence, read N- to C-terminus: D-alanine--D-alanine ligase (368 aa).

Residues Lys-151 to Asp-358 form the ATP-grasp domain. Lys-179–Glu-234 is an ATP binding site. Asp-313, Glu-325, and Asn-327 together coordinate Mg(2+).

This sequence belongs to the D-alanine--D-alanine ligase family. Mg(2+) is required as a cofactor. The cofactor is Mn(2+).

The protein localises to the cytoplasm. The enzyme catalyses 2 D-alanine + ATP = D-alanyl-D-alanine + ADP + phosphate + H(+). The protein operates within cell wall biogenesis; peptidoglycan biosynthesis. Cell wall formation. The chain is D-alanine--D-alanine ligase from Rhodococcus erythropolis (strain PR4 / NBRC 100887).